Here is a 243-residue protein sequence, read N- to C-terminus: DNA repair protein RecO (243 aa).

This sequence belongs to the RecO family.

Functionally, involved in DNA repair and RecF pathway recombination. The chain is DNA repair protein RecO from Hyphomonas neptunium (strain ATCC 15444).